The following is a 360-amino-acid chain: Peptide chain release factor 1 (360 aa).

Q233 carries the N5-methylglutamine modification. The disordered stretch occupies residues 286–305; the sequence is NEIAQERKSQVGTGDRSERI.

This sequence belongs to the prokaryotic/mitochondrial release factor family. Methylated by PrmC. Methylation increases the termination efficiency of RF1.

It localises to the cytoplasm. Peptide chain release factor 1 directs the termination of translation in response to the peptide chain termination codons UAG and UAA. The polypeptide is Peptide chain release factor 1 (Acetivibrio thermocellus (strain ATCC 27405 / DSM 1237 / JCM 9322 / NBRC 103400 / NCIMB 10682 / NRRL B-4536 / VPI 7372) (Clostridium thermocellum)).